The chain runs to 307 residues: Potassium channel subfamily K member 7 (307 aa).

Residues 1–10 are Cytoplasmic-facing; sequence MGGLRPWSRY. The chain crosses the membrane as a helical span at residues 11–31; sequence GLLVVAHLLALGLGAVVFQAL. The N-linked (GlcNAc...) asparagine glycan is linked to Asn-83. Positions 92-119 form an intramembrane region, pore-forming; that stretch reads LPSALLFAASILTTTGYGHMAPLSPGGK. Residues 120-140 traverse the membrane as a helical segment; sequence AFCMVYAALGLPASLALVATL. The Cytoplasmic portion of the chain corresponds to 141–170; the sequence is RHCLLPVLSRPRAWVAVHWQLSPARAALLQ. The helical transmembrane segment at 171-191 threads the bilayer; sequence AVALGLLVASSFVLLPALVLW. An intramembrane region (pore-forming) is located at residues 199–227; sequence LLGAVYFCFSSLSTIGLEDLLPGRGRSLH. Residues 233 to 253 form a helical membrane-spanning segment; it reads LGQLALLGYLLLGLLAMLLAV. The Cytoplasmic portion of the chain corresponds to 254–307; that stretch reads ETFSELPQVRAMGKFFRPSGPVTAEDQGGILGQDELALSTLPPAAPASGQAPAC.

The protein belongs to the two pore domain potassium channel (TC 1.A.1.8) family. In terms of assembly, homodimer.

The protein resides in the membrane. Functionally, probable potassium channel subunit. No channel activity observed in vitro as protein remains in the endoplasmic reticulum. May need to associate with an as yet unknown partner in order to reach the plasma membrane. This Homo sapiens (Human) protein is Potassium channel subfamily K member 7 (KCNK7).